The following is a 179-amino-acid chain: Acireductone dioxygenase (179 aa).

A disordered region spans residues 1–23 (MVQAWYMDESTADPRMPHRAQPD). Residues histidine 88, histidine 90, glutamate 94, and histidine 133 each contribute to the Fe(2+) site. Residues histidine 88, histidine 90, glutamate 94, and histidine 133 each coordinate Ni(2+).

The protein belongs to the acireductone dioxygenase (ARD) family. As to quaternary structure, monomer. Interacts with MMP14. Fe(2+) serves as cofactor. Requires Ni(2+) as cofactor. As to expression, detected in prostate, liver, heart, brain, muscle, kidney and seminal vesicles.

It localises to the cytoplasm. Its subcellular location is the nucleus. The protein localises to the cell membrane. The catalysed reaction is 1,2-dihydroxy-5-(methylsulfanyl)pent-1-en-3-one + O2 = 4-methylsulfanyl-2-oxobutanoate + formate + 2 H(+). The enzyme catalyses 1,2-dihydroxy-5-(methylsulfanyl)pent-1-en-3-one + O2 = 3-(methylsulfanyl)propanoate + CO + formate + 2 H(+). It functions in the pathway amino-acid biosynthesis; L-methionine biosynthesis via salvage pathway; L-methionine from S-methyl-5-thio-alpha-D-ribose 1-phosphate: step 5/6. Functionally, catalyzes 2 different reactions between oxygen and the acireductone 1,2-dihydroxy-3-keto-5-methylthiopentene (DHK-MTPene) depending upon the metal bound in the active site. Fe-containing acireductone dioxygenase (Fe-ARD) produces formate and 2-keto-4-methylthiobutyrate (KMTB), the alpha-ketoacid precursor of methionine in the methionine recycle pathway. Ni-containing acireductone dioxygenase (Ni-ARD) produces methylthiopropionate, carbon monoxide and formate, and does not lie on the methionine recycle pathway. Also down-regulates cell migration mediated by MMP14. This chain is Acireductone dioxygenase (Adi1), found in Rattus norvegicus (Rat).